Consider the following 224-residue polypeptide: Probable 2' cyclic ADP-D-ribose synthase BdTIR (224 aa).

Residues 51–178 enclose the TIR domain; sequence SRYEVFINHR…RFKFALREAK (128 aa). Residues 60–65 and Gly-93 contribute to the NAD(+) site; that span reads RGVDTK. Residue Glu-127 is part of the active site.

In terms of assembly, homodimer.

The catalysed reaction is NAD(+) + H2O = ADP-D-ribose + nicotinamide + H(+). The enzyme catalyses NADP(+) + H2O = ADP-D-ribose 2'-phosphate + nicotinamide + H(+). It catalyses the reaction NAD(+) = 2'cADPR + nicotinamide + H(+). An NAD(+) hydrolase (NADase). Upon activation catalyzes cleavage of NAD(+) into ADP-D-ribose (ADPR) and nicotinamide; NAD(+) cleavage triggers a defense system that promotes cell death. In addition to ADPR, also generates a cyclization variant of cyclic ADPR termed v-cADPR (2'cADPR). Also hydrolyzes NADP(+), but not other NAD(+)-related molecules. v-cADPR activates ThsA, an NAD(+) hydrolase in B.cereus (AC J8G6Z1). Probably makes 2'cADPR; the cADPR made by this protein is bound by cmTad1 (AC P0DW61) and activates ThsA from B.cereus. Boiling cmTad1 bound to the cyclic nucleotide releases 2'cADPR, strongly suggesting it is the product of this protein. The polypeptide is Probable 2' cyclic ADP-D-ribose synthase BdTIR (Brachypodium distachyon (Purple false brome)).